The primary structure comprises 124 residues: MPILVVLTLMSSGEIMASSLVLPKVGDLSGQWQLQLNVSGAKICDIELKNTPITPDLIWHASGDTDCLSQLLGSAPQGWRPTPDGIMLTDETGSAVAFFERAQNGYENTLPDDAGVIVLRRVQE.

The first 17 residues, 1 to 17 (MPILVVLTLMSSGEIMA), serve as a signal peptide directing secretion. Cys44 and Cys67 form a disulfide bridge.

It belongs to the protease inhibitor I38 family.

It localises to the periplasm. Its function is as follows. Inhibitor of the alkaline protease. The polypeptide is Alkaline proteinase inhibitor (inh) (Yersinia ruckeri).